A 671-amino-acid polypeptide reads, in one-letter code: Protein cereblon (671 aa).

The span at M1 to E11 shows a compositional bias: acidic residues. Disordered regions lie at residues M1–D59, L104–P130, and G150–A187. Low complexity-rich tracts occupy residues Q39–E51 and T105–P115. Residues S162–S173 show a composition bias toward polar residues. One can recognise a Lon N-terminal domain in the interval R309–S537. The CULT domain maps to E536 to K645. Residues C541, C544, C610, and C613 each coordinate Zn(2+).

This sequence belongs to the CRBN family. In terms of assembly, likely a component of a DCX (DDB1-CUL4-X-box) protein ligase complex. May interact with pic/DDB1. In terms of processing, ubiquitinated.

It is found in the nucleus. It functions in the pathway protein modification; protein ubiquitination. Functionally, substrate recognition component of a DCX (DDB1-CUL4-X-box) E3 protein ligase complex that mediates the ubiquitination and subsequent proteasomal degradation of target proteins. Has an essential role in mediating growth by negatively regulating insulin signaling. It also has a role in maintaining presynaptic function in the neuromuscular junction synapses of third-instar larvae. The protein is Protein cereblon of Drosophila grimshawi (Hawaiian fruit fly).